A 69-amino-acid polypeptide reads, in one-letter code: Protein transport protein Sec61 subunit gamma-3 (69 aa).

Methionine 1 carries the post-translational modification N-acetylmethionine. Over 1 to 32 (MEAIDSAIDPLRDFAKSSVRLVQRCHKPDRKE) the chain is Cytoplasmic. A helical membrane pass occupies residues 33–61 (FTKVAVRTAIGFVVMGFVGFFVKLVFIPI). Over 62-69 (NNIIVGSS) the chain is Extracellular.

This sequence belongs to the SecE/SEC61-gamma family. In terms of assembly, heterotrimeric complex composed of SEC61-alpha, SEC61-beta and SEC61-gamma.

The protein resides in the endoplasmic reticulum membrane. In terms of biological role, necessary for protein translocation in the endoplasmic reticulum. The sequence is that of Protein transport protein Sec61 subunit gamma-3 (SEC61G3) from Arabidopsis thaliana (Mouse-ear cress).